Consider the following 367-residue polypeptide: Histone RNA hairpin-binding protein (367 aa).

Over residues 1-12 (MAQKTPTKGTRS) the composition is skewed to polar residues. Disordered regions lie at residues 1–24 (MAQKTPTKGTRSSPRKKAWGSPIK) and 49–200 (EVTE…HWEE). Residues 57 to 73 (LASRLEEERRCKSESRR) show a composition bias toward basic and acidic residues. Over residues 147 to 156 (SNASTINEGA) the composition is skewed to polar residues. Residues 183–192 (SDSSSVASSP) show a composition bias toward low complexity. The RNA-binding stretch occupies residues 206–275 (CTDEAVLKRR…KWKRSLYEYC (70 aa)). Positions 342 to 367 (MDESTLKASTNTDPSAPTDFSKMSSH) are disordered. Over residues 347 to 356 (LKASTNTDPS) the composition is skewed to polar residues.

The protein belongs to the SLBP family. Ubiquitinated by the CBC(fem-1) (Cul2-ElonginB-ElonginC) E3 ubiquitin-protein ligase complex, leading to its degradation.

Involved in histone pre-mRNA 3' processing. Required for chromosome condensation, progression of cell death and morphogenesis. The sequence is that of Histone RNA hairpin-binding protein (cdl-1) from Caenorhabditis elegans.